A 101-amino-acid polypeptide reads, in one-letter code: NAD(P)H-quinone oxidoreductase subunit 4L, chloroplastic (101 aa).

Helical transmembrane passes span 2-22 (MFERVLFLSVYLFSIGIYGLI), 32-52 (ICLELILNSINLNLVTFSDLF), and 61-81 (IFAIFVIALAAAEAAIGLSIL).

This sequence belongs to the complex I subunit 4L family. As to quaternary structure, NDH is composed of at least 16 different subunits, 5 of which are encoded in the nucleus.

The protein resides in the plastid. It localises to the chloroplast thylakoid membrane. The catalysed reaction is a plastoquinone + NADH + (n+1) H(+)(in) = a plastoquinol + NAD(+) + n H(+)(out). It carries out the reaction a plastoquinone + NADPH + (n+1) H(+)(in) = a plastoquinol + NADP(+) + n H(+)(out). In terms of biological role, NDH shuttles electrons from NAD(P)H:plastoquinone, via FMN and iron-sulfur (Fe-S) centers, to quinones in the photosynthetic chain and possibly in a chloroplast respiratory chain. The immediate electron acceptor for the enzyme in this species is believed to be plastoquinone. Couples the redox reaction to proton translocation, and thus conserves the redox energy in a proton gradient. This chain is NAD(P)H-quinone oxidoreductase subunit 4L, chloroplastic, found in Zea mays (Maize).